A 191-amino-acid chain; its full sequence is Putative 3-methyladenine DNA glycosylase (191 aa).

Belongs to the DNA glycosylase MPG family.

In Cutibacterium acnes (strain DSM 16379 / KPA171202) (Propionibacterium acnes), this protein is Putative 3-methyladenine DNA glycosylase.